A 494-amino-acid polypeptide reads, in one-letter code: Catalase isozyme 2 (494 aa).

The segment at 1–29 is disordered; it reads MDPCKFRPSSSFDTKTTTTNAGQPVWNDN. Polar residues predominate over residues 8-22; that stretch reads PSSSFDTKTTTTNAG. Catalysis depends on residues histidine 65 and asparagine 138. Tyrosine 348 provides a ligand contact to heme.

This sequence belongs to the catalase family. As to quaternary structure, homotetramer. Heme is required as a cofactor.

Its subcellular location is the peroxisome. It is found in the glyoxysome. It catalyses the reaction 2 H2O2 = O2 + 2 H2O. In terms of biological role, occurs in almost all aerobically respiring organisms and serves to protect cells from the toxic effects of hydrogen peroxide. The sequence is that of Catalase isozyme 2 (CAT2) from Hordeum vulgare (Barley).